Reading from the N-terminus, the 291-residue chain is ATP synthase gamma chain (291 aa).

It belongs to the ATPase gamma chain family. As to quaternary structure, F-type ATPases have 2 components, CF(1) - the catalytic core - and CF(0) - the membrane proton channel. CF(1) has five subunits: alpha(3), beta(3), gamma(1), delta(1), epsilon(1). CF(0) has three main subunits: a, b and c.

The protein resides in the cell inner membrane. In terms of biological role, produces ATP from ADP in the presence of a proton gradient across the membrane. The gamma chain is believed to be important in regulating ATPase activity and the flow of protons through the CF(0) complex. This Burkholderia lata (strain ATCC 17760 / DSM 23089 / LMG 22485 / NCIMB 9086 / R18194 / 383) protein is ATP synthase gamma chain.